The primary structure comprises 245 residues: Adapter protein MecA (245 aa).

Belongs to the MecA family. Homodimer.

Enables the recognition and targeting of unfolded and aggregated proteins to the ClpC protease or to other proteins involved in proteolysis. In Streptococcus pneumoniae (strain Hungary19A-6), this protein is Adapter protein MecA.